The primary structure comprises 125 residues: Glycine cleavage system H protein 1 (125 aa).

The 82-residue stretch at 22-103 folds into the Lipoyl-binding domain; the sequence is KAYIGITDYA…PYGSWLVAVR (82 aa). Lys63 is modified (N6-lipoyllysine).

The protein belongs to the GcvH family. In terms of assembly, the glycine cleavage system is composed of four proteins: P, T, L and H. It depends on (R)-lipoate as a cofactor.

The glycine cleavage system catalyzes the degradation of glycine. The H protein shuttles the methylamine group of glycine from the P protein to the T protein. The chain is Glycine cleavage system H protein 1 from Caldanaerobacter subterraneus subsp. tengcongensis (strain DSM 15242 / JCM 11007 / NBRC 100824 / MB4) (Thermoanaerobacter tengcongensis).